Consider the following 272-residue polypeptide: Dermonecrotic toxin LvSicTox-alphaIC1bv (272 aa).

H5 is an active-site residue. Positions 25 and 27 each coordinate Mg(2+). The active-site Nucleophile is H41. Cystine bridges form between C45–C51 and C47–C189. Mg(2+) is bound at residue D84.

Belongs to the arthropod phospholipase D family. Class II subfamily. The cofactor is Mg(2+). Expressed by the venom gland.

Its subcellular location is the secreted. It catalyses the reaction an N-(acyl)-sphingosylphosphocholine = an N-(acyl)-sphingosyl-1,3-cyclic phosphate + choline. The catalysed reaction is an N-(acyl)-sphingosylphosphoethanolamine = an N-(acyl)-sphingosyl-1,3-cyclic phosphate + ethanolamine. The enzyme catalyses a 1-acyl-sn-glycero-3-phosphocholine = a 1-acyl-sn-glycero-2,3-cyclic phosphate + choline. It carries out the reaction a 1-acyl-sn-glycero-3-phosphoethanolamine = a 1-acyl-sn-glycero-2,3-cyclic phosphate + ethanolamine. Functionally, dermonecrotic toxins cleave the phosphodiester linkage between the phosphate and headgroup of certain phospholipids (sphingolipid and lysolipid substrates), forming an alcohol (often choline) and a cyclic phosphate. This toxin acts on sphingomyelin (SM). It may also act on ceramide phosphoethanolamine (CPE), lysophosphatidylcholine (LPC) and lysophosphatidylethanolamine (LPE), but not on lysophosphatidylserine (LPS), and lysophosphatidylglycerol (LPG). It acts by transphosphatidylation, releasing exclusively cyclic phosphate products as second products. Induces dermonecrosis, hemolysis, increased vascular permeability, edema, inflammatory response, and platelet aggregation. The sequence is that of Dermonecrotic toxin LvSicTox-alphaIC1bv from Loxosceles variegata (Recluse spider).